The following is a 316-amino-acid chain: MKRNTRKIAIIGTGLVGSSCAYSIVNQGICEELLLIDINHERAVGEAMDLSHCINFTNTRTKVYAGSYEDCKDMDIVIITAGPAPKPGQSRLDTLGASAKIMESVVGGVMESGFDGIFLLASNPVDIITYQVWKLSGLPRNRVIGTGTSLDSSRLRTILSEMLHVDPRSIHGYSLGEHGDSQMVAWSHVTVGGKPILQILEEKKDQFGEIDLDEIVEKTAKAGWEIYKRKGTTYYGIGNSLAYIASSIFNDDYRVIAVSAILDGEYGEYDLCTGVPAIITRDGIKEIVELNLTEDEESRFAKSNDILRDYMKTIGY.

4 residues coordinate NAD(+): Val16, Asp37, Arg42, and Tyr68. Arg91 contributes to the substrate binding site. NAD(+) contacts are provided by residues Ser104, 121–123 (ASN), and Thr146. 123–126 (NPVD) serves as a coordination point for substrate. 151–154 (DSSR) contributes to the substrate binding site. Beta-D-fructose 1,6-bisphosphate is bound by residues Arg156 and His171. His178 serves as the catalytic Proton acceptor. Residue Thr233 participates in substrate binding.

This sequence belongs to the LDH/MDH superfamily. LDH family. In terms of assembly, homotetramer.

Its subcellular location is the cytoplasm. It carries out the reaction (S)-lactate + NAD(+) = pyruvate + NADH + H(+). The protein operates within fermentation; pyruvate fermentation to lactate; (S)-lactate from pyruvate: step 1/1. With respect to regulation, allosterically activated by fructose 1,6-bisphosphate (FBP). In terms of biological role, catalyzes the conversion of lactate to pyruvate. The protein is L-lactate dehydrogenase 3 of Bacillus cereus (strain ATCC 10987 / NRS 248).